Consider the following 289-residue polypeptide: Fatty acid elongase 3-like (289 aa).

A run of 7 helical transmembrane segments spans residues 35 to 55 (SFLF…HILL), 75 to 95 (SLLM…SAAA), 129 to 149 (VFFW…RTIF), 157 to 176 (LAVS…FLWL), 181 to 203 (SYQI…YRFW), 205 to 225 (GFGL…LVLV), and 248 to 268 (IGAW…FLNF).

Belongs to the ELO family.

It localises to the membrane. Probable very long-chain fatty acid (VLCFA) elongase that controls VLCFA composition and functions to inhibit abscisic acid (ABA)-mediated stress responses, including regulation of stomatal aperture, maintenance of primary root growth and inhibition of germination. VLCFA pathway and products may function as signaling components acting upstream of sphingosine-1-phosphate, ceramide and the heterotrimeric G-protein complex, in lipid-mediated regulation of abiotic stress signaling. This is Fatty acid elongase 3-like (HOS3) from Arabidopsis thaliana (Mouse-ear cress).